Consider the following 904-residue polypeptide: Auxilin-related protein 1 (904 aa).

3 disordered regions span residues 46 to 99 (AAGK…FDYD), 150 to 731 (SSIS…NLRK), and 749 to 776 (SASQ…RHQR). Positions 59–69 (DPGRDGDDLLF) are enriched in basic and acidic residues. The segment covering 81 to 95 (YGSSSGDSRSPSAPA) has biased composition (low complexity). Positions 178 to 188 (KGADSDREEKG) are enriched in basic and acidic residues. Positions 201–215 (RTSSPPSKRTTSETT) are enriched in low complexity. Acidic residues predominate over residues 232 to 244 (VEEDPFVVLEESE). Basic and acidic residues predominate over residues 245 to 271 (STPREPSRTDPLDDIGKFNSRKTDHSS). Residues 370 to 383 (SAPPPTRPPPPRPT) are compositionally biased toward pro residues. Over residues 394 to 419 (SIPTSAYHSHVPSSGRASVNSPTASQ) the composition is skewed to polar residues. Residues 456-663 (SAAAMKDAMD…AAAEARGRAA (208 aa)) are a coiled coil. Composition is skewed to basic and acidic residues over residues 462–570 (DAMD…EAHA) and 581–660 (TDAR…EARG). Positions 619-640 (REKAEKAAAEAKERANAEAREK) constitute a R domain. A compositionally biased stretch (low complexity) spans 661-673 (RAAAQAKAKQQQE). Residues 674 to 697 (NTNDLDSFFSSISRPNSAPRQRTN) show a composition bias toward polar residues. A coiled-coil region spans residues 762 to 804 (ETEERRRARLERHQRTQERAAKALAEKNERDLQVQREQVEKDR). Residues 764-776 (EERRRARLERHQR) show a composition bias toward basic and acidic residues. The region spanning 839–904 (CGWQPVSLTD…WNKFNSEELF (66 aa)) is the J domain.

In terms of assembly, interacts with SH3P1.

Its subcellular location is the cell membrane. The protein resides in the golgi apparatus. It is found in the trans-Golgi network. The protein localises to the endoplasmic reticulum. It localises to the cytoplasmic vesicle. Promotes uncoating of clathrin-coated vesicles. May interact directly with clathrin. The protein is Auxilin-related protein 1 of Arabidopsis thaliana (Mouse-ear cress).